The chain runs to 788 residues: Elongator complex protein 2 (788 aa).

8 WD repeats span residues 13–51 (GANKQTQVSDIHKVKKIVAFGAGKTIALWDPIEPNNKGV), 57–96 (GHEAEVTCVRFVPDSDFMVSASEDHHVKIWKFTDYSHLQC), 102–139 (HYSKTIVALSALPSLISVGCADGTISIWRQNIQNDEFG), 200–243 (GHED…LIDD), 279–318 (GHDDWISSLQWHESRLQLLAATADTSLMVWEPDETSGIWV), 336–377 (GSSG…ICDQ), 383–422 (GATKDVTDIAWSPSGEYLLATSLDQTTRLFAPWIYDASGR), and 437–475 (IHGYDMICVETVTDTRFVSGGDEKILRSFDLPKGVAGML). Residues 490 to 530 (PDSATVPVLGLSNKAGEDDANEDDEEEEGGNKETPDITDPL) form a disordered region. Position 492 is a phosphoserine (Ser-492). Residues 507-517 (DDANEDDEEEE) show a composition bias toward acidic residues. 5 WD repeats span residues 556–600 (GHGF…EIKP), 604–643 (FHSLTITRLKFSKDGKFLLSVCRDRKWALWERNMEDNTFE), 651–692 (PHTR…ADDY), 699–742 (KHTK…FELI), and 750–788 (TPADKITRLRWSHLKRNGKLFLGVGSSDLSTRIYSLAYE).

This sequence belongs to the WD repeat ELP2 family. As to quaternary structure, component of the elongator complex which consists of ELP1/IKI3, ELP2, ELP3, ELP4, ELP5/IKI1 and ELP6. The elongator complex is composed of two copies of the Elp123 subcomplex (composed of ELP1/IKI3, ELP2 and ELP3) and two copies of the Elp456 subcomplex (composed of ELP4, ELP5/IKI1 and ELP6). The Elp123 subcomplex forms a two-lobed scaffold, which binds the Elp456 subcomplex asymmetrically. In the complex, ELP2 interacts with ELP1/IKI3. In each lobe, ELP2 is tightly sandwiched between ELP1/IKI3 and ELP3. The Elp123 subcomplex binds tRNA through ELP1/IKI3 and ELP3 and can bind 2 tRNAs simultaneously. tRNA-binding induces conformational rearrangements which precisely position the targeted anticodon base in the active site. The Elp456 subcomplex binds tRNA and has ATPase activity. Interacts with KTI11/DPH3.

It localises to the cytoplasm. The protein resides in the nucleus. It functions in the pathway tRNA modification; 5-methoxycarbonylmethyl-2-thiouridine-tRNA biosynthesis. Component of the elongator complex, a multiprotein complex which is required for multiple tRNA modifications, including mcm5U (5-methoxycarbonylmethyl uridine), mcm5s2U (5-methoxycarbonylmethyl-2-thiouridine), and ncm5U (5-carbamoylmethyl uridine). The elongator complex catalyzes formation of carboxymethyluridine in the wobble base at position 34 in tRNAs. It functions as a gamma-toxin target (TOT); disruption of the complex confers resistance to Kluyveromyces lactis toxin zymocin (pGKL1 killer toxin). May also be involved in sensitivity to Pichia inositovora toxin. ELP2 binds to microtubules. Independently, ELP2 may be involved in polarized exocytosis. The protein is Elongator complex protein 2 (ELP2) of Saccharomyces cerevisiae (strain ATCC 204508 / S288c) (Baker's yeast).